An 87-amino-acid polypeptide reads, in one-letter code: MKSFLVAFLIVLVFFCVEMKIGNGFKIHEVPEPTGKWCGYSVPMKPCINDDRVKRCIAENTHGWLMATGMCTSIPSLKDCYCMHQCP.

The signal sequence occupies residues 1–24 (MKSFLVAFLIVLVFFCVEMKIGNG). 3 disulfide bridges follow: Cys-38–Cys-71, Cys-47–Cys-80, and Cys-56–Cys-82.

Belongs to the DEFL family.

The protein resides in the secreted. The sequence is that of Putative defensin-like protein 317 from Arabidopsis thaliana (Mouse-ear cress).